Reading from the N-terminus, the 1174-residue chain is Male determiner protein Mdmd(V) (1174 aa).

Residues 1-15 (MNATDAESRKPENKP) are compositionally biased toward basic and acidic residues. Disordered regions lie at residues 1 to 51 (MNAT…SGQR), 79 to 110 (RKDG…PVEL), and 136 to 259 (KQLS…LRRS). Over residues 16-35 (SSESSSSGSTSGSSDGEVSS) the composition is skewed to low complexity. Polar residues predominate over residues 36–47 (KTYFKNNKSKVL). Basic and acidic residues predominate over residues 79 to 92 (RKDGSNEMLPKEDS). Residues 93–102 (INTNHNYTTD) are compositionally biased toward polar residues. Residues 138–153 (LSAYRSRSRSTRLSYS) show a composition bias toward low complexity. Over residues 167–180 (SRYKKSVLRSRRTS) the composition is skewed to basic residues. The segment covering 183–200 (HGRDSSTTKRSVSRDKDN) has biased composition (basic and acidic residues). Positions 201–223 (RLRRRIGSSRSHTRSHSRFRRSE) are enriched in basic residues. The span at 235-259 (RSQERRHERRRSMSSDYERIALRRS) shows a compositional bias: basic and acidic residues. Positions 348 to 531 (KKYIHGYINK…KVLFQVRRDG (184 aa)) constitute an MIF4G domain. A compositionally biased stretch (low complexity) spans 597–608 (DSDGSFGSGSNS). Positions 597-616 (DSDGSFGSGSNSETALSDCD) are disordered. Residues 641-757 (ALRRTIYLTL…SWDVLDCIKL (117 aa)) form the MI domain. Over residues 840–857 (SAPSSSSSSSLSSELSAP) the composition is skewed to low complexity. 2 disordered regions span residues 840–1045 (SAPS…SRTK) and 1095–1133 (RKDN…NHSR). Positions 869–909 (KKKHKGKNKKMTKKKNPSKKKEKTKKIVGKNKIAAKNKTIK) are enriched in basic residues. Positions 910–924 (RRTDKDNSSSKDNFL) are enriched in basic and acidic residues. The span at 926-957 (SESSSNESISLDSLSSELFAPSSYSSSESSND) shows a compositional bias: low complexity. Residues 963-1001 (KHKGKNKKMTKKKNPSNKREKTKKKLSKNKKAPNKNTKK) show a composition bias toward basic residues. A compositionally biased stretch (low complexity) spans 1010-1020 (SSESSISESKS). The segment covering 1034 to 1045 (RKKRVTSKSRTK) has biased composition (basic residues). Residues 1095 to 1118 (RKDNYGNRQNHEISQRHDSEIKRR) are compositionally biased toward basic and acidic residues. Residues 1119–1130 (REERKKRHHEKN) show a composition bias toward basic residues.

This sequence belongs to the CWC22 family. In terms of assembly, component of the spliceosome C complex.

The protein localises to the nucleus speckle. In terms of biological role, male determiner protein (M-factor) that controls male somatic sexual differentiation. Acts as a dominant factor that regulates the mRNA splicing of transformer (tra) and doublesex (dsx) transcripts and promotes expression of male splice forms of tra and dsx. Probably acts as a component of the spliceosome C complex required for mRNA splicing factor and exon-junction complex (EJC) assembly. Hinders eIF4AIII from non-specifically binding RNA and escorts it to the splicing machinery to promote EJC assembly on mature mRNAs. The chain is Male determiner protein Mdmd(V) from Musca domestica (House fly).